The following is a 162-amino-acid chain: Nucleotide-binding protein SAV_4896 (162 aa).

It belongs to the YajQ family.

Functionally, nucleotide-binding protein. The chain is Nucleotide-binding protein SAV_4896 from Streptomyces avermitilis (strain ATCC 31267 / DSM 46492 / JCM 5070 / NBRC 14893 / NCIMB 12804 / NRRL 8165 / MA-4680).